A 91-amino-acid chain; its full sequence is Small ribosomal subunit protein uS19 (91 aa).

The protein belongs to the universal ribosomal protein uS19 family.

In terms of biological role, protein S19 forms a complex with S13 that binds strongly to the 16S ribosomal RNA. The chain is Small ribosomal subunit protein uS19 from Pseudomonas fluorescens (strain SBW25).